The following is a 361-amino-acid chain: Chorismate synthase (361 aa).

NADP(+) contacts are provided by Arg48 and Arg54. FMN contacts are provided by residues 125 to 127 (RSS), 238 to 239 (NA), Gly278, 293 to 297 (KPTSS), and Arg319.

The protein belongs to the chorismate synthase family. In terms of assembly, homotetramer. It depends on FMNH2 as a cofactor.

It carries out the reaction 5-O-(1-carboxyvinyl)-3-phosphoshikimate = chorismate + phosphate. Its pathway is metabolic intermediate biosynthesis; chorismate biosynthesis; chorismate from D-erythrose 4-phosphate and phosphoenolpyruvate: step 7/7. Catalyzes the anti-1,4-elimination of the C-3 phosphate and the C-6 proR hydrogen from 5-enolpyruvylshikimate-3-phosphate (EPSP) to yield chorismate, which is the branch point compound that serves as the starting substrate for the three terminal pathways of aromatic amino acid biosynthesis. This reaction introduces a second double bond into the aromatic ring system. This Photorhabdus laumondii subsp. laumondii (strain DSM 15139 / CIP 105565 / TT01) (Photorhabdus luminescens subsp. laumondii) protein is Chorismate synthase.